A 463-amino-acid polypeptide reads, in one-letter code: Maintenance of mitochondrial morphology protein 1-2 (463 aa).

Residues 1-23 lie on the Lumenal side of the membrane; that stretch reads MVIPAELIQKALKQQSGWGFTEG. A helical transmembrane segment spans residues 24 to 44; sequence LVLGQLSVIITVIIILKFVIF. The Cytoplasmic segment spans residues 45–463; that stretch reads AENKSPKKGN…TGADTASGSS (419 aa). The tract at residues 72 to 152 is disordered; sequence GGQTANGVKT…VAGSTSNLAV (81 aa). Polar residues predominate over residues 108–122; that stretch reads RPGSSRVSMVRSTSG. The SMP-LTD domain occupies 205–435; the sequence is APESLDWFNV…EPHQMIFILP (231 aa).

The protein belongs to the MMM1 family. In terms of assembly, homodimer. Component of the ER-mitochondria encounter structure (ERMES) or MDM complex, composed of MMM1, MDM10, MDM12 and MDM34. An MMM1 homodimer associates with one molecule of MDM12 on each side in a pairwise head-to-tail manner, and the SMP-LTD domains of MMM1 and MDM12 generate a continuous hydrophobic tunnel for phospholipid trafficking.

The protein resides in the endoplasmic reticulum membrane. Its function is as follows. Component of the ERMES/MDM complex, which serves as a molecular tether to connect the endoplasmic reticulum (ER) and mitochondria. Components of this complex are involved in the control of mitochondrial shape and protein biogenesis, and function in nonvesicular lipid trafficking between the ER and mitochondria. The MDM12-MMM1 subcomplex functions in the major beta-barrel assembly pathway that is responsible for biogenesis of all outer membrane beta-barrel proteins, and acts in a late step after the SAM complex. The MDM10-MDM12-MMM1 subcomplex further acts in the TOM40-specific pathway after the action of the MDM12-MMM1 complex. Essential for establishing and maintaining the structure of mitochondria and maintenance of mtDNA nucleoids. The polypeptide is Maintenance of mitochondrial morphology protein 1-2 (Yarrowia lipolytica (strain CLIB 122 / E 150) (Yeast)).